We begin with the raw amino-acid sequence, 313 residues long: Olfactory receptor 1J4 (313 aa).

Topologically, residues 1 to 25 are extracellular; it reads MKRENQSSVSEFLLLDLPIWPEQQA. An N-linked (GlcNAc...) asparagine glycan is attached at asparagine 5. The helical transmembrane segment at 26-49 threads the bilayer; it reads VFFTLFLGMYLITVLGNLLIILLI. The Cytoplasmic segment spans residues 50 to 57; the sequence is RLDSHLHT. A helical transmembrane segment spans residues 58 to 79; sequence PMFFFLSHLALTDISLSSVTVP. The Extracellular segment spans residues 80–100; sequence KMLLSMQTQDQSILYAGCVTQ. Cysteine 97 and cysteine 189 are joined by a disulfide. Residues 101 to 120 traverse the membrane as a helical segment; sequence MYFFIFFTDLDNFLLTSMAY. The Cytoplasmic segment spans residues 121–139; sequence DRYVAICHPLRYTTIMKEG. The helical transmembrane segment at 140–158 threads the bilayer; it reads LCNLLVTVSWILSCTNALS. The Extracellular portion of the chain corresponds to 159–195; it reads HTLLLAQLSFCADNTIPHFFCDLVALLKLSCSDISLN. The helical transmembrane segment at 196 to 219 threads the bilayer; it reads ELVIFTVGQAVITLPLICILISYG. At 220-236 the chain is on the cytoplasmic side; that stretch reads HIGVTILKAPSTKGIFK. The chain crosses the membrane as a helical span at residues 237-259; that stretch reads ALSTCGSHLSVVSLYYGTIIGLY. Residues 260 to 272 lie on the Extracellular side of the membrane; the sequence is FLPSSSASSDKDV. A helical membrane pass occupies residues 273–292; the sequence is IASVMYTVITPLLNPFIYSL. Residues 293–313 are Cytoplasmic-facing; it reads RNRDIKGALERLFNRATVLSQ.

The protein belongs to the G-protein coupled receptor 1 family.

The protein localises to the cell membrane. In terms of biological role, odorant receptor. The polypeptide is Olfactory receptor 1J4 (OR1J4) (Homo sapiens (Human)).